The primary structure comprises 505 residues: Chromatin assembly factor 1 subunit FAS2 homolog (505 aa).

7 WD repeats span residues 11–50 (HEQQ…SDKK), 62–101 (SHSS…DGEA), 110–149 (FHHK…VQQK), 152–191 (GHLH…KSKN), 223–268 (FHDE…SRRD), 278–333 (GASK…PILI), and 337–378 (LHYA…LPYN). The segment at 479–505 (VTAPPVSTKNSASSKPTKKRITPIAIN) is disordered.

It belongs to the WD repeat HIR1 family. In terms of assembly, component of the chromatin assembly factor 1 (CAF-1) complex, composed of FSM (FAS1), FAS2 and MSI1.

The protein localises to the nucleus. In terms of biological role, component of the chromatin assembly factor complex (CAF-1) involved in chromatin assembly following DNA replication and DNA repair. Required for several aspects of development, including apical meristem maintenance by regulating the durations of the S- and G2-phases of the cell cycle through its chromatin assembly activity. In Oryza sativa subsp. japonica (Rice), this protein is Chromatin assembly factor 1 subunit FAS2 homolog (FAS2).